The following is a 327-amino-acid chain: G protein pathway suppressor 2 (327 aa).

Residues 14–109 (MARALHRHIM…RRRKEQSDLT (96 aa)) adopt a coiled-coil conformation. The interval 26 to 65 (RERKRQEEEEVDKMMEQKMKEEQERRKKKEMEERMSLEET) is disordered. Glycyl lysine isopeptide (Lys-Gly) (interchain with G-Cter in SUMO1) cross-links involve residues Lys45 and Lys71. Residues 61–94 (SLEETKEQILKLEEKLLALQEEKHQLFLQLKKVL) are interaction with SUMO. Disordered regions lie at residues 177–208 (HGQF…SPSQ) and 253–327 (QKQM…FYHK). The segment covering 253 to 271 (QKQMEHANQQTGFSDSSSL) has biased composition (polar residues). Residue Arg312 is modified to Asymmetric dimethylarginine. Positions 317–327 (QHSQNPRFYHK) are enriched in polar residues. Position 323 is an asymmetric dimethylarginine; alternate (Arg323). An Omega-N-methylarginine; alternate modification is found at Arg323.

As to quaternary structure, component of the N-Cor repressor complex, at least composed of NCOR1, NCOR2, HDAC3, TBL1X, TBL1R, CORO2A and GPS2. Interacts (when sumoylated at Lys-71) with TBL1X; leading to protect GPS2 from degradation by the proteasome. Interacts with UBE2N; leading to inhibit UBE2N/Ubc13 activity. Interacts with TRAF1. Interacts with TRAF2. Interacts with TRAF6. Interacts with PPARG (when in the liganded conformation). Interacts with (sumoylated) NR1H2; interaction with sumoylated NR1H2 and NR5A2 onto hepatic acute phase protein promoters prevents N-Cor corepressor complex dissociation. Interacts with (sumoylated) NR5A2; interaction with sumoylated NR1H2 and NR5A2 onto hepatic acute phase protein promoters prevents N-Cor corepressor complex dissociation. Interacts with NR1H3. Interacts with RFX4. Interacts with ANKRD26. In terms of assembly, (Microbial infection) Interacts (via coiled coil domain) with hepatitis C virus (HCV) NS5A. Sumoylation regulates its subcellular location. Sumoylation at Lys-45 and Lys-71 regulates the shuttling between the cytoplasm and the nucleus. Sumoylation at Lys-71 is required for interaction with TBL1X. Sumoylated at Lys-45 and Lys-71 in mitochondrion. Desumoylation by SENP1 leads to relocation from the mitochondria to the nucleus. In terms of processing, ubiquitinated at the C-terminus by SIAH2; leading to its degradation by the proteasome. Interaction with TBL1X and methylation at Arg-323 protect GPS2 against ubiquitination and degradation. Post-translationally, methylated at Arg-312 and Arg-323 by PRMT6. Methylation at Arg-323 protects from degradation by the proteasome. Widely expressed.

It localises to the nucleus. The protein localises to the mitochondrion. Its subcellular location is the cytoplasm. It is found in the cytosol. Key regulator of inflammation, lipid metabolism and mitochondrion homeostasis that acts by inhibiting the activity of the ubiquitin-conjugating enzyme UBE2N/Ubc13, thereby inhibiting 'Lys-63'-linked ubiquitination. In the nucleus, can both acts as a corepressor and coactivator of transcription, depending on the context. Acts as a transcription coactivator in adipocytes by promoting the recruitment of PPARG to promoters: acts by inhibiting the activity of the ubiquitin-conjugating enzyme UBE2N/Ubc13, leading to stabilization of KDM4A and subsequent histone H3 'Lys-9' (H3K9) demethylation. Promotes cholesterol efflux by acting as a transcription coactivator. Acts as a regulator of B-cell development by inhibiting UBE2N/Ubc13, thereby restricting the activation of Toll-like receptors (TLRs) and B-cell antigen receptors (BCRs) signaling pathways. Acts as a key mediator of mitochondrial stress response: in response to mitochondrial depolarization, relocates from the mitochondria to the nucleus following desumoylation and specifically promotes expression of nuclear-encoded mitochondrial genes. Promotes transcription of nuclear-encoded mitochondrial genes by inhibiting UBE2N/Ubc13. Can also act as a corepressor as part of the N-Cor repressor complex by repressing active PPARG. Plays an anti-inflammatory role in macrophages and is required for insulin sensitivity by acting as a corepressor. Plays an anti-inflammatory role during the hepatic acute phase response by interacting with sumoylated NR1H2 and NR5A2 proteins, thereby preventing N-Cor corepressor complex dissociation. In the cytosol, also plays a non-transcriptional role by regulating insulin signaling and pro-inflammatory pathways. In the cytoplasm, acts as a negative regulator of inflammation by inhibiting the pro-inflammatory TNF-alpha pathway; acts by repressing UBE2N/Ubc13 activity. In the cytoplasm of adipocytes, restricts the activation of insulin signaling via inhibition of UBE2N/Ubc13-mediated ubiquitination of AKT. Able to suppress G-protein- and mitogen-activated protein kinase-mediated signal transduction. Acts as a tumor-suppressor in liposarcoma. Functionally, (Microbial infection) Required for efficient replication of hepatitis C virus (HCV) by promoting the interaction between VAPA and HCV virus protein NS5A. The sequence is that of G protein pathway suppressor 2 from Homo sapiens (Human).